The chain runs to 210 residues: Large ribosomal subunit protein bL25 (210 aa).

A disordered region spans residues 186-210 (ISSASTEKEAESNQESTSTTPSSES). Over residues 198–210 (NQESTSTTPSSES) the composition is skewed to low complexity.

Belongs to the bacterial ribosomal protein bL25 family. CTC subfamily. Part of the 50S ribosomal subunit; part of the 5S rRNA/L5/L18/L25 subcomplex. Contacts the 5S rRNA. Binds to the 5S rRNA independently of L5 and L18.

Functionally, this is one of the proteins that binds to the 5S RNA in the ribosome where it forms part of the central protuberance. In Ehrlichia chaffeensis (strain ATCC CRL-10679 / Arkansas), this protein is Large ribosomal subunit protein bL25.